The following is a 778-amino-acid chain: MAQKMDCGAGLLGFQAEASVEDSALLMQTLMEAIQISEAPPTNQATAAASPQSSQPPTANEMADIQVSAAAARPKSAFKVQNATTKGPNGVYDFSQAHNAKDVPNTQPKAAFKSQNATPKGPNAAYDFSQAATTGELAANKSEMAFKAQNATTKVGPNATYNFSQSLNANDLANSRPKTPFKAWNDTTKAPTADTQTQNVNQAKMATSQADIETDPGISEPDGATAQTSADGSQAQNLESRTIIRGKRTRKINNLNVEENSSGDQRRAPLAAGTWRSAPVPVTTQNPPGAPPNVLWQTPLAWQNPSGWQNQTARQTPPARQSPPARQTPPAWQNPVAWQNPVIWPNPVIWQNPVIWPNPIVWPGPVVWPNPLAWQNPPGWQTPPGWQTPPGWQGPPDWQGPPDWPLPPDWPLPPDWPLPTDWPLPPDWIPADWPIPPDWQNLRPSPNLRPSPNSRASQNPGAAQPRDVALLQERANKLVKYLMLKDYTKVPIKRSEMLRDIIREYTDVYPEIIERACFVLEKKFGIQLKEIDKEEHLYILISTPESLAGILGTTKDTPKLGLLLVILGVIFMNGNRASEAVLWEALRKMGLRPGVRHPLLGDLRKLLTYEFVKQKYLDYRRVPNSNPPEYEFLWGLRSYHETSKMKVLRFIAEVQKRDPRDWTAQFMEAADEALDALDAAAAEAEARAEARTRMGIGDEAVSGPWSWDDIEFELLTWDEEGDFGDPWSRIPFTFWARYHQNARSRFPQTFAGPIIGPGGTASANFAANFGAIGFFWVE.

Disordered stretches follow at residues 41–60 (PTNQATAAASPQSSQPPTAN), 78–123 (FKVQ…KGPN), and 182–333 (KAWN…PAWQ). Residue tyrosine 92 is modified to Phosphotyrosine. 5 stretches are compositionally biased toward polar residues: residues 104-118 (PNTQPKAAFKSQNAT), 185-211 (NDTTKAPTADTQTQNVNQAKMATSQAD), 225-240 (TAQTSADGSQAQNLES), 253-263 (NNLNVEENSSG), and 300-319 (LAWQNPSGWQNQTARQTPPA). 19 consecutive repeat copies span residues 296 to 301 (WQTPLA), 302 to 307 (WQNPSG), 308 to 313 (WQNQTA), 332 to 337 (WQNPVA), 338 to 343 (WQNPVI), 344 to 349 (WPNPVI), 350 to 355 (WQNPVI), 356 to 361 (WPNPIV), 362 to 367 (WPGPVV), 368 to 373 (WPNPLA), 374 to 379 (WQNPPG), 380 to 385 (WQTPPG), 386 to 391 (WQTPPG), 392 to 397 (WQGPPD), 398 to 403 (WQGPPD), 404 to 409 (WPLPPD), 410 to 415 (WPLPPD), 416 to 421 (WPLPTD), and 422 to 427 (WPLPPD). The 22 X 6 AA tandem repeats of W-[PQ]-X-P-X-X stretch occupies residues 296 to 444 (WQTPLAWQNP…IPPDWQNLRP (149 aa)). The tract at residues 376 to 412 (NPPGWQTPPGWQTPPGWQGPPDWQGPPDWPLPPDWPL) is disordered. The span at 377 to 397 (PPGWQTPPGWQTPPGWQGPPD) shows a compositional bias: low complexity. Over residues 398 to 412 (WQGPPDWPLPPDWPL) the composition is skewed to pro residues. A 20; approximate repeat occupies 428–432 (WIPAD). Repeat copies occupy residues 433 to 438 (WPIPPD) and 439 to 444 (WQNLRP). Over residues 440 to 455 (QNLRPSPNLRPSPNSR) the composition is skewed to low complexity. The tract at residues 440–466 (QNLRPSPNLRPSPNSRASQNPGAAQPR) is disordered. The region spanning 471-669 (LQERANKLVK…RDWTAQFMEA (199 aa)) is the MAGE domain.

As to quaternary structure, interacts with DLX5, DLX7 and MSX2 and forms homomultimers. Interacts with UNC5A. Interacts with TRIM28 and PJA1. Interacts with NGFR/p75NTR and RORA. Expressed in bone marrow stromal cells from both multiple myeloma patients and healthy donors. Seems to be ubiquitously expressed.

It localises to the cytoplasm. The protein resides in the cell membrane. Its subcellular location is the nucleus. Its function is as follows. Involved in the apoptotic response after nerve growth factor (NGF) binding in neuronal cells. Inhibits cell cycle progression, and facilitates NGFR-mediated apoptosis. May act as a regulator of the function of DLX family members. May enhance ubiquitin ligase activity of RING-type zinc finger-containing E3 ubiquitin-protein ligases. Proposed to act through recruitment and/or stabilization of the Ubl-conjugating enzyme (E2) at the E3:substrate complex. Plays a role in the circadian rhythm regulation. May act as RORA co-regulator, modulating the expression of core clock genes such as BMAL1 and NFIL3, induced, or NR1D1, repressed. This Homo sapiens (Human) protein is Melanoma-associated antigen D1 (MAGED1).